A 405-amino-acid polypeptide reads, in one-letter code: S-adenosylmethionine:tRNA ribosyltransferase-isomerase (405 aa).

The protein belongs to the QueA family. In terms of assembly, monomer.

Its subcellular location is the cytoplasm. The catalysed reaction is 7-aminomethyl-7-carbaguanosine(34) in tRNA + S-adenosyl-L-methionine = epoxyqueuosine(34) in tRNA + adenine + L-methionine + 2 H(+). It functions in the pathway tRNA modification; tRNA-queuosine biosynthesis. Functionally, transfers and isomerizes the ribose moiety from AdoMet to the 7-aminomethyl group of 7-deazaguanine (preQ1-tRNA) to give epoxyqueuosine (oQ-tRNA). This Psychrobacter cryohalolentis (strain ATCC BAA-1226 / DSM 17306 / VKM B-2378 / K5) protein is S-adenosylmethionine:tRNA ribosyltransferase-isomerase.